We begin with the raw amino-acid sequence, 314 residues long: Porphobilinogen deaminase (314 aa).

The residue at position 249 (C249) is an S-(dipyrrolylmethanemethyl)cysteine.

It belongs to the HMBS family. In terms of assembly, monomer. The cofactor is dipyrromethane.

It catalyses the reaction 4 porphobilinogen + H2O = hydroxymethylbilane + 4 NH4(+). It functions in the pathway porphyrin-containing compound metabolism; protoporphyrin-IX biosynthesis; coproporphyrinogen-III from 5-aminolevulinate: step 2/4. Its function is as follows. Tetrapolymerization of the monopyrrole PBG into the hydroxymethylbilane pre-uroporphyrinogen in several discrete steps. This is Porphobilinogen deaminase from Brucella anthropi (strain ATCC 49188 / DSM 6882 / CCUG 24695 / JCM 21032 / LMG 3331 / NBRC 15819 / NCTC 12168 / Alc 37) (Ochrobactrum anthropi).